The primary structure comprises 281 residues: Lipoyl synthase (281 aa).

The [4Fe-4S] cluster site is built by Cys-35, Cys-40, Cys-46, Cys-61, Cys-65, Cys-68, and Ser-274. A Radical SAM core domain is found at 47–263 (FGCGQATFLI…RDEALALGFR (217 aa)).

Belongs to the radical SAM superfamily. Lipoyl synthase family. It depends on [4Fe-4S] cluster as a cofactor.

It is found in the cytoplasm. It catalyses the reaction [[Fe-S] cluster scaffold protein carrying a second [4Fe-4S](2+) cluster] + N(6)-octanoyl-L-lysyl-[protein] + 2 oxidized [2Fe-2S]-[ferredoxin] + 2 S-adenosyl-L-methionine + 4 H(+) = [[Fe-S] cluster scaffold protein] + N(6)-[(R)-dihydrolipoyl]-L-lysyl-[protein] + 4 Fe(3+) + 2 hydrogen sulfide + 2 5'-deoxyadenosine + 2 L-methionine + 2 reduced [2Fe-2S]-[ferredoxin]. It participates in protein modification; protein lipoylation via endogenous pathway; protein N(6)-(lipoyl)lysine from octanoyl-[acyl-carrier-protein]: step 2/2. Its function is as follows. Catalyzes the radical-mediated insertion of two sulfur atoms into the C-6 and C-8 positions of the octanoyl moiety bound to the lipoyl domains of lipoate-dependent enzymes, thereby converting the octanoylated domains into lipoylated derivatives. This chain is Lipoyl synthase, found in Trichlorobacter lovleyi (strain ATCC BAA-1151 / DSM 17278 / SZ) (Geobacter lovleyi).